Here is a 316-residue protein sequence, read N- to C-terminus: WEB family protein At3g13190 (316 aa).

3 coiled-coil regions span residues 42-90 (WNKE…MIND), 119-195 (EEES…AEEH), and 233-266 (RDET…MAQE). Positions 295 to 316 (STKEVLKSKPRSSSKEGCLVKC) are disordered.

It belongs to the WEB family.

The protein is WEB family protein At3g13190 of Arabidopsis thaliana (Mouse-ear cress).